The chain runs to 805 residues: MSFNHREIEKKWQKYWEENKTFKTTEDDGKRKFYALDMFPYPSGAGLHVGHPEGYTATDILARMKRMQGYNVLHPMGWDAFGLPAEQYALDTGNDPAEFTEKNINNFRRQIKSLGFSYDWDREVNTTDPNYYKWTQWIFLKLYEKGLAYMDEVPVNWCPALGTVLANEEVIDGKSERGGHPVIRKPMKQWMLRITAYADRLLEDLEELDWPESIKEMQRNWIGRSEGANIHFQVDGHDETFTVFTTRPDTLFGATYAVLAPEHPLVEKITTPEQKEAVEAYLKQIQSKSDLERTDLAKEKTGVFTGAYAINPANGEKLPIWIADYVLMSYGTGAIMAVPAHDERDYEFAKKFNLPIKQVVAGGDISKEAYTGDGEHINSDFLNGLNKEEATKKMIEWLEANGKGEKKVSYRLRDWLFSRQRYWGEPIPIIHWEDGTMTPVPEEELPLVLPKTDEIKPSGTGESPLANIEEWVSVVDPKTGKKGRRETNTMPQWAGSCWYYLRYIDPHNDKQLADPEKLEKWLPVDIYIGGAEHAVLHLLYARFWHKFLYDIGVVPTKEPFQKLFNQGMILGENNEKMSKSKGNVVNPDDIVESHGADTLRLYEMFMGPLEASIAWSTKGLDGARRFLDRVWRLFVEENGELNPKIVDNPETDTLERVYHQTVKKVTEDYEALRFNTAISQLMVFINEAYKAPILPKAYMEGFVKLLSPVCPHIAEELWEKLGYSNTIAYEAWPAYDEAKLVEDEVEIVIQVNGKVRAKLHVPADATKEQLEQLAMEDEKIKEQIEGKTVRKVIAVPGKLVNIVAN.

The short motif at 40 to 51 (PYPSGAGLHVGH) is the 'HIGH' region element. Residues 576–580 (KMSKS) carry the 'KMSKS' region motif. Position 579 (lysine 579) interacts with ATP.

It belongs to the class-I aminoacyl-tRNA synthetase family.

It localises to the cytoplasm. It carries out the reaction tRNA(Leu) + L-leucine + ATP = L-leucyl-tRNA(Leu) + AMP + diphosphate. The protein is Leucine--tRNA ligase of Anoxybacillus flavithermus (strain DSM 21510 / WK1).